A 149-amino-acid chain; its full sequence is Transcriptional regulator MraZ (149 aa).

SpoVT-AbrB domains are found at residues 7 to 54 (KYVN…GISH) and 83 to 126 (AVQL…QPQN).

The protein belongs to the MraZ family. Forms oligomers.

The protein localises to the cytoplasm. Its subcellular location is the nucleoid. The protein is Transcriptional regulator MraZ of Rickettsia conorii (strain ATCC VR-613 / Malish 7).